A 74-amino-acid chain; its full sequence is Delta-actitoxin-Amc3a (74 aa).

The N-terminal stretch at 1–19 (MNRLIILVVAAVFLGMASA) is a signal peptide. Residues 20–24 (EEDVL) constitute a propeptide that is removed on maturation. P29 carries the post-translational modification Hydroxyproline. 3 disulfides stabilise this stretch: C30/C70, C32/C60, and C53/C71. Q73 carries the post-translational modification Glutamine amide.

This sequence belongs to the sea anemone sodium channel inhibitory toxin family. Type I subfamily.

It is found in the secreted. Its subcellular location is the nematocyst. Inhibits voltage-gated sodium channels (Nav). The sequence is that of Delta-actitoxin-Amc3a from Antheopsis maculata (Sea anemone).